The following is a 291-amino-acid chain: N-acetylmannosamine kinase (291 aa).

ATP-binding positions include 5–12 (AIDIGGTK) and 132–139 (GVGGGVVS). 4 residues coordinate Zn(2+): histidine 156, cysteine 166, cysteine 168, and cysteine 173.

It belongs to the ROK (NagC/XylR) family. NanK subfamily. Homodimer.

The catalysed reaction is an N-acyl-D-mannosamine + ATP = an N-acyl-D-mannosamine 6-phosphate + ADP + H(+). It functions in the pathway amino-sugar metabolism; N-acetylneuraminate degradation; D-fructose 6-phosphate from N-acetylneuraminate: step 2/5. Functionally, catalyzes the phosphorylation of N-acetylmannosamine (ManNAc) to ManNAc-6-P. This Escherichia coli O7:K1 (strain IAI39 / ExPEC) protein is N-acetylmannosamine kinase.